The sequence spans 205 residues: GTP cyclohydrolase-2 (205 aa).

49-53 (RLHSE) provides a ligand contact to GTP. Cys54, Cys65, and Cys67 together coordinate Zn(2+). Residues Gln70, 92-94 (EGR), and Thr114 contribute to the GTP site. The active-site Proton acceptor is the Asp126. Arg128 functions as the Nucleophile in the catalytic mechanism. GTP is bound by residues Thr149 and Lys154.

This sequence belongs to the GTP cyclohydrolase II family. Requires Zn(2+) as cofactor.

The enzyme catalyses GTP + 4 H2O = 2,5-diamino-6-hydroxy-4-(5-phosphoribosylamino)-pyrimidine + formate + 2 phosphate + 3 H(+). It participates in cofactor biosynthesis; riboflavin biosynthesis; 5-amino-6-(D-ribitylamino)uracil from GTP: step 1/4. Its function is as follows. Catalyzes the conversion of GTP to 2,5-diamino-6-ribosylamino-4(3H)-pyrimidinone 5'-phosphate (DARP), formate and pyrophosphate. This chain is GTP cyclohydrolase-2, found in Pseudomonas putida (strain ATCC 700007 / DSM 6899 / JCM 31910 / BCRC 17059 / LMG 24140 / F1).